The following is a 148-amino-acid chain: Large ribosomal subunit protein uL15 (148 aa).

The segment covering 1-12 (MSEPIKLHDLRP) has biased composition (basic and acidic residues). The disordered stretch occupies residues 1–52 (MSEPIKLHDLRPAKGANKPKTRVGRGEASKGKTAGRGTKGTKARKQVSAAFE).

Belongs to the universal ribosomal protein uL15 family. Part of the 50S ribosomal subunit.

Functionally, binds to the 23S rRNA. This is Large ribosomal subunit protein uL15 from Corynebacterium diphtheriae (strain ATCC 700971 / NCTC 13129 / Biotype gravis).